Consider the following 86-residue polypeptide: MAHKKGSGSTRNGRDSNSKRLGVKKYGGEQVTAGNILIRQRGTKVKPGQNVGKGKDDTLFSLIDGFVLFEKSNQKQKTISVYSAKK.

Positions 1–27 (MAHKKGSGSTRNGRDSNSKRLGVKKYG) are disordered.

This sequence belongs to the bacterial ribosomal protein bL27 family.

It is found in the plastid. Its subcellular location is the chloroplast. This chain is Large ribosomal subunit protein bL27c, found in Pyropia yezoensis (Susabi-nori).